We begin with the raw amino-acid sequence, 288 residues long: Phosphatidylserine decarboxylase proenzyme (288 aa).

Active-site charge relay system; for autoendoproteolytic cleavage activity residues include Asp-101, His-158, and Ser-262. Residue Ser-262 is the Schiff-base intermediate with substrate; via pyruvic acid; for decarboxylase activity of the active site. Residue Ser-262 is modified to Pyruvic acid (Ser); by autocatalysis.

Belongs to the phosphatidylserine decarboxylase family. PSD-B subfamily. Prokaryotic type I sub-subfamily. As to quaternary structure, heterodimer of a large membrane-associated beta subunit and a small pyruvoyl-containing alpha subunit. The cofactor is pyruvate. In terms of processing, is synthesized initially as an inactive proenzyme. Formation of the active enzyme involves a self-maturation process in which the active site pyruvoyl group is generated from an internal serine residue via an autocatalytic post-translational modification. Two non-identical subunits are generated from the proenzyme in this reaction, and the pyruvate is formed at the N-terminus of the alpha chain, which is derived from the carboxyl end of the proenzyme. The autoendoproteolytic cleavage occurs by a canonical serine protease mechanism, in which the side chain hydroxyl group of the serine supplies its oxygen atom to form the C-terminus of the beta chain, while the remainder of the serine residue undergoes an oxidative deamination to produce ammonia and the pyruvoyl prosthetic group on the alpha chain. During this reaction, the Ser that is part of the protease active site of the proenzyme becomes the pyruvoyl prosthetic group, which constitutes an essential element of the active site of the mature decarboxylase.

It localises to the cell membrane. The catalysed reaction is a 1,2-diacyl-sn-glycero-3-phospho-L-serine + H(+) = a 1,2-diacyl-sn-glycero-3-phosphoethanolamine + CO2. Its pathway is phospholipid metabolism; phosphatidylethanolamine biosynthesis; phosphatidylethanolamine from CDP-diacylglycerol: step 2/2. Functionally, catalyzes the formation of phosphatidylethanolamine (PtdEtn) from phosphatidylserine (PtdSer). The chain is Phosphatidylserine decarboxylase proenzyme from Alkalilimnicola ehrlichii (strain ATCC BAA-1101 / DSM 17681 / MLHE-1).